The chain runs to 139 residues: Protein archease (139 aa).

Positions 12, 138, and 139 each coordinate Ca(2+).

The protein belongs to the archease family.

Functionally, activates the tRNA-splicing ligase complex by facilitating the enzymatic turnover of catalytic subunit RtcB. Acts by promoting the guanylylation of RtcB, a key intermediate step in tRNA ligation. Can also alter the NTP specificity of RtcB such that ATP, dGTP or ITP is used efficiently. The sequence is that of Protein archease from Saccharolobus solfataricus (strain ATCC 35092 / DSM 1617 / JCM 11322 / P2) (Sulfolobus solfataricus).